A 369-amino-acid polypeptide reads, in one-letter code: Chorismate synthase (369 aa).

NADP(+) is bound by residues R48 and R54. FMN is bound by residues 125–127 (RSS), 238–239 (NA), G278, 293–297 (KPTSS), and R319.

The protein belongs to the chorismate synthase family. Homotetramer. Requires FMNH2 as cofactor.

It carries out the reaction 5-O-(1-carboxyvinyl)-3-phosphoshikimate = chorismate + phosphate. The protein operates within metabolic intermediate biosynthesis; chorismate biosynthesis; chorismate from D-erythrose 4-phosphate and phosphoenolpyruvate: step 7/7. Catalyzes the anti-1,4-elimination of the C-3 phosphate and the C-6 proR hydrogen from 5-enolpyruvylshikimate-3-phosphate (EPSP) to yield chorismate, which is the branch point compound that serves as the starting substrate for the three terminal pathways of aromatic amino acid biosynthesis. This reaction introduces a second double bond into the aromatic ring system. The sequence is that of Chorismate synthase from Burkholderia mallei (strain NCTC 10229).